Here is a 310-residue protein sequence, read N- to C-terminus: Nucleotide-binding protein Ddes_0972 (310 aa).

30–37 provides a ligand contact to ATP; that stretch reads GLSGAGKS. Residue 82-85 participates in GTP binding; it reads DLRQ.

This sequence belongs to the RapZ-like family.

Its function is as follows. Displays ATPase and GTPase activities. This is Nucleotide-binding protein Ddes_0972 from Desulfovibrio desulfuricans (strain ATCC 27774 / DSM 6949 / MB).